The sequence spans 934 residues: Bifunctional uridylyltransferase/uridylyl-removing enzyme (934 aa).

Positions 1–379 (MSAHDLKLEE…TFSRRKRKLS (379 aa)) are uridylyltransferase. The tract at residues 380-736 (DDGAFISENH…AKPHAFEAVT (357 aa)) is uridylyl-removing. The HD domain occupies 496–613 (VDEHLLRCIA…IDFADTVQTM (118 aa)). ACT domains are found at residues 737 to 818 (EITV…DMLA) and 848 to 931 (VIEV…RSPQ).

This sequence belongs to the GlnD family. Mg(2+) serves as cofactor.

The catalysed reaction is [protein-PII]-L-tyrosine + UTP = [protein-PII]-uridylyl-L-tyrosine + diphosphate. It carries out the reaction [protein-PII]-uridylyl-L-tyrosine + H2O = [protein-PII]-L-tyrosine + UMP + H(+). With respect to regulation, uridylyltransferase (UTase) activity is inhibited by glutamine, while glutamine activates uridylyl-removing (UR) activity. Its function is as follows. Modifies, by uridylylation and deuridylylation, the PII regulatory proteins (GlnB and homologs), in response to the nitrogen status of the cell that GlnD senses through the glutamine level. Under low glutamine levels, catalyzes the conversion of the PII proteins and UTP to PII-UMP and PPi, while under higher glutamine levels, GlnD hydrolyzes PII-UMP to PII and UMP (deuridylylation). Thus, controls uridylylation state and activity of the PII proteins, and plays an important role in the regulation of nitrogen assimilation and metabolism. In Brucella suis biovar 1 (strain 1330), this protein is Bifunctional uridylyltransferase/uridylyl-removing enzyme.